An 878-amino-acid polypeptide reads, in one-letter code: Staphylococcal nuclease domain-containing protein 1 (878 aa).

2 TNase-like domains span residues 3–142 and 167–312; these read QYVS…IWGP and KKLN…IWKN. Ser-316 is subject to Phosphoserine. TNase-like domains follow at residues 326–464 and 493–626; these read KDYS…MWSG and RKLS…MWHD. Residues 695–755 form the Tudor domain; that stretch reads KINVGMNVAA…SSLPDTYTKL (61 aa).

It is found in the cytoplasm. It localises to the cytosol. In Schizosaccharomyces pombe (strain 972 / ATCC 24843) (Fission yeast), this protein is Staphylococcal nuclease domain-containing protein 1.